The sequence spans 319 residues: Taste receptor type 2 member 30 (319 aa).

Residue Met1 is a topological domain, extracellular. A helical transmembrane segment spans residues 2 to 22 (ITFLPIIFSILIVVIFVIGNF). The Cytoplasmic portion of the chain corresponds to 23-46 (ANGFIALVNSIEWVKRQKISFVDQ). The helical transmembrane segment at 47-67 (ILTALAVSRVGLLWVLLLHWY) threads the bilayer. Residues 68–86 (ATQLNPAFYSVEVRITAYN) lie on the Extracellular side of the membrane. Residues 87–107 (VWAVTNHFSSWLATSLSMFYL) form a helical membrane-spanning segment. Topologically, residues 108–126 (LRIANFSNLIFLRIKRRVK) are cytoplasmic. A helical transmembrane segment spans residues 127–147 (SVVLVILLGPLLFLVCHLFVI). Residues 148-178 (NMDETVWTKEYEGNVTWKIKLRSAMYHSNMT) lie on the Extracellular side of the membrane. Asn161 and Asn176 each carry an N-linked (GlcNAc...) asparagine glycan. The helical transmembrane segment at 179-199 (LTMLANFVPLTLTLISFLLLI) threads the bilayer. The Cytoplasmic portion of the chain corresponds to 200–229 (CSLCKHLKKMQLHGKGSQDPSTKVHIKALQ). A helical membrane pass occupies residues 230–250 (TVTSFLLLCAIYFLSMIISVC). Over 251 to 259 (NFGRLEKQP) the chain is Extracellular. Residues 260–280 (VFMFCQAIIFSYPSTHPFILI) form a helical membrane-spanning segment. At 281 to 319 (LGNKKLKQIFLSVLRHVRYWVKDRSLRLHRFTRGALCVF) the chain is on the cytoplasmic side.

It belongs to the G-protein coupled receptor T2R family. In terms of tissue distribution, expressed in subsets of taste receptor cells of the tongue and exclusively in gustducin-positive cells.

It is found in the membrane. Its function is as follows. Receptor that may play a role in the perception of bitterness and is gustducin-linked. May play a role in sensing the chemical composition of the gastrointestinal content. The activity of this receptor may stimulate alpha gustducin, mediate PLC-beta-2 activation and lead to the gating of TRPM5. The polypeptide is Taste receptor type 2 member 30 (TAS2R30) (Homo sapiens (Human)).